The primary structure comprises 510 residues: Ribonuclease Y (510 aa).

The helical transmembrane segment at 2–22 (IYIIFSSIFAGFILGFLVRVF) threads the bilayer. Positions 198–258 (TVASVELPND…IRKELAKRTL (61 aa)) constitute a KH domain. Residues 324–419 (VLSHSKETAI…VQIADAISAS (96 aa)) enclose the HD domain.

Belongs to the RNase Y family.

Its subcellular location is the cell membrane. Functionally, endoribonuclease that initiates mRNA decay. In Borrelia garinii subsp. bavariensis (strain ATCC BAA-2496 / DSM 23469 / PBi) (Borreliella bavariensis), this protein is Ribonuclease Y.